Consider the following 567-residue polypeptide: 2-succinyl-5-enolpyruvyl-6-hydroxy-3-cyclohexene-1-carboxylate synthase (567 aa).

Belongs to the TPP enzyme family. MenD subfamily. As to quaternary structure, homodimer. The cofactor is Mg(2+). Mn(2+) is required as a cofactor. Requires thiamine diphosphate as cofactor.

The catalysed reaction is isochorismate + 2-oxoglutarate + H(+) = 5-enolpyruvoyl-6-hydroxy-2-succinyl-cyclohex-3-ene-1-carboxylate + CO2. It participates in quinol/quinone metabolism; 1,4-dihydroxy-2-naphthoate biosynthesis; 1,4-dihydroxy-2-naphthoate from chorismate: step 2/7. It functions in the pathway quinol/quinone metabolism; menaquinone biosynthesis. In terms of biological role, catalyzes the thiamine diphosphate-dependent decarboxylation of 2-oxoglutarate and the subsequent addition of the resulting succinic semialdehyde-thiamine pyrophosphate anion to isochorismate to yield 2-succinyl-5-enolpyruvyl-6-hydroxy-3-cyclohexene-1-carboxylate (SEPHCHC). The chain is 2-succinyl-5-enolpyruvyl-6-hydroxy-3-cyclohexene-1-carboxylate synthase from Yersinia pestis bv. Antiqua (strain Angola).